The following is a 393-amino-acid chain: Chorismate synthase (393 aa).

Residues R48 and R54 each coordinate NADP(+). FMN is bound by residues 125-127 (RSS), 238-239 (NA), G278, 293-297 (KPTSS), and R319. Residues 355–393 (ACTTPKIPGHTGPREGQEEGPSDSEPKVEFADDPEPDEA) are disordered.

It belongs to the chorismate synthase family. In terms of assembly, homotetramer. Requires FMNH2 as cofactor.

The enzyme catalyses 5-O-(1-carboxyvinyl)-3-phosphoshikimate = chorismate + phosphate. The protein operates within metabolic intermediate biosynthesis; chorismate biosynthesis; chorismate from D-erythrose 4-phosphate and phosphoenolpyruvate: step 7/7. Catalyzes the anti-1,4-elimination of the C-3 phosphate and the C-6 proR hydrogen from 5-enolpyruvylshikimate-3-phosphate (EPSP) to yield chorismate, which is the branch point compound that serves as the starting substrate for the three terminal pathways of aromatic amino acid biosynthesis. This reaction introduces a second double bond into the aromatic ring system. The polypeptide is Chorismate synthase (Nitrosospira multiformis (strain ATCC 25196 / NCIMB 11849 / C 71)).